The primary structure comprises 769 residues: Major inner protein P1 (769 aa).

Homodimer. Associates with the polymerase complex.

It localises to the virion. Functionally, P1 is the major inner capsid (core) protein of the polyhedral procapsid, which is responsible for genomic replication and transcription. Forms a dodecahedral shell from 60 asymmetric dimers. Binds to RNA and may be involved in genomic packaging. This is Major inner protein P1 (P1) from Pseudomonas phage phi6 (Bacteriophage phi-6).